Consider the following 354-residue polypeptide: MIETDKLAAPARVIAATPASSQEEAFERALRPKLLDEYVGQEKVRGQLDIFMHAARKRREALDHVLLFGPPGLGKTTLAHIIAREMGVSLRQTSGPVLERPGDLAALLTNLEANDVLFIDEIHRLSPVVEEILYPALEDYQIDIMIGEGPAARSVKLDLQPFTLVGATTRAGMLTNPLRDRFGIVARLEFYTAEELARIVTRSAQLLQARIDPQGALEIARRARGTPRIANRLLRRVRDYAEVKGDGTITREMADAALAMLDVDRVGFDLMDRKLLEAVLHKFGGGPVGVDNLAAAIGEERDTIEDVLEPYLIQQGYLQRTPRGRVATAAAYRHFGLASPQGMAGDAGELFGDA.

The interval 4–191 is large ATPase domain (RuvB-L); it reads TDKLAAPARV…FGIVARLEFY (188 aa). ATP-binding positions include Leu30, Arg31, Gly72, Lys75, Thr76, Thr77, 138 to 140, Arg181, Tyr191, and Arg228; that span reads EDY. Residue Thr76 participates in Mg(2+) binding. Residues 192-262 are small ATPAse domain (RuvB-S); it reads TAEELARIVT…MADAALAMLD (71 aa). The head domain (RuvB-H) stretch occupies residues 265–354; that stretch reads RVGFDLMDRK…GDAGELFGDA (90 aa). DNA contacts are provided by Arg301, Arg320, and Arg325.

Belongs to the RuvB family. Homohexamer. Forms an RuvA(8)-RuvB(12)-Holliday junction (HJ) complex. HJ DNA is sandwiched between 2 RuvA tetramers; dsDNA enters through RuvA and exits via RuvB. An RuvB hexamer assembles on each DNA strand where it exits the tetramer. Each RuvB hexamer is contacted by two RuvA subunits (via domain III) on 2 adjacent RuvB subunits; this complex drives branch migration. In the full resolvosome a probable DNA-RuvA(4)-RuvB(12)-RuvC(2) complex forms which resolves the HJ.

Its subcellular location is the cytoplasm. The catalysed reaction is ATP + H2O = ADP + phosphate + H(+). Functionally, the RuvA-RuvB-RuvC complex processes Holliday junction (HJ) DNA during genetic recombination and DNA repair, while the RuvA-RuvB complex plays an important role in the rescue of blocked DNA replication forks via replication fork reversal (RFR). RuvA specifically binds to HJ cruciform DNA, conferring on it an open structure. The RuvB hexamer acts as an ATP-dependent pump, pulling dsDNA into and through the RuvAB complex. RuvB forms 2 homohexamers on either side of HJ DNA bound by 1 or 2 RuvA tetramers; 4 subunits per hexamer contact DNA at a time. Coordinated motions by a converter formed by DNA-disengaged RuvB subunits stimulates ATP hydrolysis and nucleotide exchange. Immobilization of the converter enables RuvB to convert the ATP-contained energy into a lever motion, pulling 2 nucleotides of DNA out of the RuvA tetramer per ATP hydrolyzed, thus driving DNA branch migration. The RuvB motors rotate together with the DNA substrate, which together with the progressing nucleotide cycle form the mechanistic basis for DNA recombination by continuous HJ branch migration. Branch migration allows RuvC to scan DNA until it finds its consensus sequence, where it cleaves and resolves cruciform DNA. The sequence is that of Holliday junction branch migration complex subunit RuvB from Cupriavidus taiwanensis (strain DSM 17343 / BCRC 17206 / CCUG 44338 / CIP 107171 / LMG 19424 / R1) (Ralstonia taiwanensis (strain LMG 19424)).